Here is a 252-residue protein sequence, read N- to C-terminus: MTFLEEILAQKVIEVAEMPLEKVKDKRETYSFYDFLKAHPEKMQLIAEVKRASPSKGEINMGVDPVTQAKSYEAAGAGMISVLTDPVFFKGSIEDLREVARNVKIPVICKDFIISEKQLIRARNAGATVVLLIISALSEAALKTLFEQATALDLEVLVEVHDQKELAIAQKLGAKLIGVNNRNLHTFEVDIAVSEKLARDFSTNVCFISESGFKTAEDVGRVSKEYNAVLVGEALMREKSPEVAAKRLKVKR.

This sequence belongs to the TrpC family.

The enzyme catalyses 1-(2-carboxyphenylamino)-1-deoxy-D-ribulose 5-phosphate + H(+) = (1S,2R)-1-C-(indol-3-yl)glycerol 3-phosphate + CO2 + H2O. Its pathway is amino-acid biosynthesis; L-tryptophan biosynthesis; L-tryptophan from chorismate: step 4/5. This chain is Indole-3-glycerol phosphate synthase, found in Listeria welshimeri serovar 6b (strain ATCC 35897 / DSM 20650 / CCUG 15529 / CIP 8149 / NCTC 11857 / SLCC 5334 / V8).